Consider the following 479-residue polypeptide: MNRNPDQNTLPNITLKIIETYLGRVPSVNEYHMLKLQARNIQKITVFNKDIFVSLVKKNKKRFFSDVDTSASEIKDRILSYFSKQTQTYNIGKLFTIIELQSVLVTTYTDILGVLTIKAPNVISSKISYNVTSMEELARDMLNSMNVAVIDKAKVMGRHNVSSLVKNVNKLMEEYLRRHNKSCICYGSYSLYLINPNIRYGDIDILQTNSRTFLIDLAFLIKFITGNNIILSKIPYLRNYMVIKDENDNHIIDSFNIRQDTMNVVPKIFIDNIYIVDPTFQLLNMIKMFSQIDRLEDLSKDPEKFNARMATMLEYVRYTHGIVFDGKRNNMPMKCIIDENNRIVTVTTKDYFSFKKCLVYLDENVLSSDILDLNADTSCDFESVTNSVYLIHDNIMYTYFSNTILLSDKGKVHEISARGLCAHILLYQMLTSGEYKQCLSDLLNSMMNRDKIPIYSHTERDKKPGRHGFINIEKDIIVF.

Catalysis depends on residues aspartate 202 and aspartate 204. Positions 202, 204, and 253 each coordinate Ca(2+).

This sequence belongs to the poxviridae poly(A) polymerase catalytic subunit family. Heterodimer of a large (catalytic) subunit and a small (regulatory) subunit.

The catalysed reaction is RNA(n) + ATP = RNA(n)-3'-adenine ribonucleotide + diphosphate. Polymerase that creates the 3'-poly(A) tail of mRNA's. In Cowpox virus (strain GRI-90 / Grishak) (CPV), this protein is Poly(A) polymerase catalytic subunit (OPG063).